The primary structure comprises 711 residues: Putative DNA topoisomerase 3 (711 aa).

A Toprim domain is found at 2–135 (KYLILAEKPS…LRRLWISSVT (134 aa)). E8 and D104 together coordinate Mg(2+). The Topo IA-type catalytic domain maps to 152–580 (YNDLYYAALA…EMKGFTKDVV (429 aa)). Positions 186–191 (SLGRVQ) are interaction with DNA. Catalysis depends on Y305, which acts as the O-(5'-phospho-DNA)-tyrosine intermediate. Residues 691 to 711 (MNKNEGLDNNPFKDALKNLNL) are disordered.

Belongs to the type IA topoisomerase family. It depends on Mg(2+) as a cofactor.

It catalyses the reaction ATP-independent breakage of single-stranded DNA, followed by passage and rejoining.. Releases the supercoiling and torsional tension of DNA, which is introduced during the DNA replication and transcription, by transiently cleaving and rejoining one strand of the DNA duplex. Introduces a single-strand break via transesterification at a target site in duplex DNA. The scissile phosphodiester is attacked by the catalytic tyrosine of the enzyme, resulting in the formation of a DNA-(5'-phosphotyrosyl)-enzyme intermediate and the expulsion of a 3'-OH DNA strand. The free DNA strand then undergoes passage around the unbroken strand, thus removing DNA supercoils. Finally, in the religation step, the DNA 3'-OH attacks the covalent intermediate to expel the active-site tyrosine and restore the DNA phosphodiester backbone. The sequence is that of Putative DNA topoisomerase 3 from Staphylococcus aureus (strain bovine RF122 / ET3-1).